The sequence spans 402 residues: Rubredoxin-oxygen oxidoreductase (402 aa).

Residues 30-216 (PMGTTYNAYL…KAIETLVGAG (187 aa)) form a zinc metallo-hydrolase region. 6 residues coordinate Fe cation: His79, Glu81, Asp83, His146, Asp165, and His226. The 139-residue stretch at 255–393 (VVIFYDSMWH…QLKTMAQTIA (139 aa)) folds into the Flavodoxin-like domain.

The protein in the N-terminal section; belongs to the zinc metallo-hydrolase group 3 family. As to quaternary structure, homodimer. FMN is required as a cofactor. Fe cation serves as cofactor.

It functions in the pathway energy metabolism; electron transfer. Functionally, catalyzes the four-electron reduction of one oxygen molecule to two water molecules. The chain is Rubredoxin-oxygen oxidoreductase (roo) from Megalodesulfovibrio gigas (strain ATCC 19364 / DSM 1382 / NCIMB 9332 / VKM B-1759) (Desulfovibrio gigas).